Reading from the N-terminus, the 494-residue chain is Neuronal acetylcholine receptor subunit alpha-6 (494 aa).

A signal peptide spans 1-25 (MLTSKGQGFLHGGLCLWLCVFTPFF). Residues 26–239 (KGCVGCATEE…ITYSFYIRRL (214 aa)) are Extracellular-facing. N-linked (GlcNAc...) asparagine glycosylation is found at asparagine 54 and asparagine 171. 2 cysteine pairs are disulfide-bonded: cysteine 158–cysteine 172 and cysteine 222–cysteine 223. 3 helical membrane passes run 240–264 (PMFY…VFYL), 272–290 (VTLC…LVIT), and 306–327 (YLLF…VLNI). Over 328–465 (HYRTPTTHTM…WKYVAMVVDR (138 aa)) the chain is Cytoplasmic. Residue serine 401 is modified to Phosphoserine. The helical transmembrane segment at 466 to 484 (VFLWVFIIVCVFGTAGLFL) threads the bilayer.

It belongs to the ligand-gated ion channel (TC 1.A.9) family. Acetylcholine receptor (TC 1.A.9.1) subfamily. Alpha-6/CHRNA6 sub-subfamily. In terms of assembly, neuronal AChR is composed of two different types of subunits: alpha and non-alpha (beta). CHRNA6/alpha-6 subunit can be combined to CHRNB2/beta-2, CHRNA4/alpha-4 and CHRNB3/beta-3 to give rise to functional receptors. Heteropentamers containing CHRNB3 have an stoichiometry of (CHRNA6:CHRNB2)2:CHRNB3. Interacts with LYPD6.

The protein resides in the synaptic cell membrane. It catalyses the reaction Ca(2+)(in) = Ca(2+)(out). The enzyme catalyses K(+)(in) = K(+)(out). It carries out the reaction Na(+)(in) = Na(+)(out). With respect to regulation, activated by a myriad of ligands such as acetylcholine, cytisine and nicotine. CHRNA6 nAChR activity is inhibited by the antagonists alpha-conotoxin MII and PIA, a small disulfide-constrained peptides from cone snails. Its function is as follows. Component of neuronal acetylcholine receptors (nAChRs) that function as pentameric, ligand-gated cation channels with high calcium permeability among other activities. nAChRs are excitatory neurotrasnmitter receptors formed by a collection of nAChR subunits known to mediate synaptic transmission in the nervous system and the neuromuscular junction. Each nAchR subunit confers differential attributes to channel properties, including activation, deactivation and desensitization kinetics, pH sensitivity, cation permeability, and binding to allosteric modulators. CHRNA6 forms pentameric channels with CHRNB2, CHRNB3 and CHRNA4 that exhibit high sensitivity to ACh and nicotine and are predominantly expressed in only a few brain areas, including dopaminergic neurons, norepirephrine neurons and cells of the visual system. nAChrs containing CHRNA6 subunits mediate endogenous cholinergic modulation of dopamine and gamma-aminobutyric acid (GABA) release in response to nicotine at nerve terminals. In Homo sapiens (Human), this protein is Neuronal acetylcholine receptor subunit alpha-6.